The chain runs to 400 residues: MRWVQRTSLVTQIAIAVVIGIVLAAVWPAATPHLAILGSLFISALKAVAPVLVFVLVMSAISNHTPGETTHIRPVLVLYAVGTLAAATVGVVASMWFPSTLTLQAPAQAAAGPGSVSEVLMNVLKSVVENPVKALLEANYIGILAWAIALGLALRHASAGTRAMLQDGAAAVTQVIQLVIRLAPLGILGLVASTFAEAGAQALWGYAQLLAVLLGCMLFVALVVNPLIVYVAIRRNPYPLVLMCLRESGVTAFFTRSSAANIPINLALAKRLRLNEDTYSIAIPLGATINMAGAAITISVLSLAAANTLGIQVDLPTALLLCVVASLCACGASGVAGGSLLLIPLACSLFGIGNDVAMQVVAIGFIIGILQDSAETALNSSTDVIFTAAACLAQERKAQV.

The next 9 membrane-spanning stretches (helical) occupy residues 9-29, 36-56, 75-95, 134-154, 175-195, 209-229, 281-301, 323-343, and 349-369; these read LVTQ…VWPA, ILGS…VFVL, VLVL…VASM, ALLE…GLAL, VIQL…ASTF, LLAV…PLIV, IAIP…ISVL, VVAS…LLLI, and LFGI…IIGI.

Belongs to the dicarboxylate/amino acid:cation symporter (DAACS) (TC 2.A.23) family.

It is found in the cell inner membrane. It carries out the reaction L-serine(in) + Na(+)(in) = L-serine(out) + Na(+)(out). The enzyme catalyses L-threonine(in) + Na(+)(in) = L-threonine(out) + Na(+)(out). In terms of biological role, involved in the import of serine and threonine into the cell, with the concomitant import of sodium (symport system). The sequence is that of Serine/threonine transporter SstT from Acidovorax sp. (strain JS42).